The chain runs to 425 residues: Histone-binding protein RBBP7 (425 aa).

7 WD repeats span residues 47-122, 128-173, 181-217, 228-269, 275-312, 318-369, and 376-403; these read QWLP…KINH, RARY…LRLR, GLSWNSNLSGHLLSASDDHTVCLWDISAGPKEGKVVD, VVED…HSVD, VNCLSFNPYSEFILATGSADKTVALWDLRNLKLKLHSF, EIFQ…LFIH, and ISDFSWNPNEPWVICSVSEDNIMQIWQM.

This sequence belongs to the WD repeat RBAP46/RBAP48/MSI1 family. As to quaternary structure, binds directly to helix 1 of the histone fold of histone H4, a region that is not accessible when H4 is in chromatin.

The protein resides in the nucleus. In terms of biological role, core histone-binding subunit that may target chromatin remodeling factors, histone acetyltransferases and histone deacetylases to their histone substrates in a manner that is regulated by nucleosomal DNA. Component of several complexes which regulate chromatin metabolism. This is Histone-binding protein RBBP7 (rbbp7) from Xenopus tropicalis (Western clawed frog).